Consider the following 886-residue polypeptide: MLRLAGLLLCVTSFLSTSSLGANAGPRLDNDRLYRYSYSAELGLNRPTGSTRGNPGFRISSDVDISLVWRNPEIQDEQLLQVQISNVQVESAGKHSRKNNIFHGSSTESILGKVRLEALQRPFMVLWKMGKIRSLYAHKGEPATIKNLKRGVASMLMMQLKSGKMMEADSSGKCLVEYKATKHQVIRTKHLDTCKTQEKGFTTYSPVLGVSGKSASETVITLENGIIKSADVEETHILSINARHTAATKVLSRQSLTLKKIEVGPTEVAGKDVAGVVKSLDDKFMSVGVIVEKVKAKCKGCPNLMDTWKAVRSKLEPDSLSKAEAPRSFLTLLHSLRKASKAEILTVLRNCSKTALPQLVDAVTSAQTTSSLSAILEFLDFSKKEGLVLQERFLYACGFASHPTETMLQSLLDVSQGKIGSPDIKESVVIIMGALLRKLCLKGACELPTVVKVKELLLAGPDSTQVESEVQMYLLALKNALLPEAVPLLAKYAESEVGAYSTIAITALQRYDPVLITPEVKKTVNRIYHQNQRIYEKNVRAAAADVIMSSSPSYMEVKNVLLSIGHLPHEMNKYMLSKVQDILRFEMPACKLVQQVMKDMISHNYDRFSKTGSSSAFSGFMAQTADVISTYNLDILYSGSGVLRRSNMNIYGQSNNALLHGLQVTIEAQGLESLIAATADEGEEELESFAGMSALLFDVQLRPVTFFKGYSDLMSKMFSMSGDPINVVKGLILLTDHSQVIPLQSGLRASAEFQGGLAIDISGGMEFSLWYRESKTSVNNRGALVVIGNVTVDMDFVSAGVEVGFETEASLDFITTVQFSEYPFLVCMQMDKTTFPFREMVSKQEKLPSGQTFSTKRSRDQLVPGSEFPLHQENSNMCKKVFEQAW.

Residues 1 to 24 form the signal peptide; that stretch reads MLRLAGLLLCVTSFLSTSSLGANA. The Vitellogenin domain occupies 28–662; that stretch reads LDNDRLYRYS…QSNNALLHGL (635 aa). 2 disulfides stabilise this stretch: cysteine 174-cysteine 194 and cysteine 440-cysteine 445.

Heterodimer; heterodimerizes with the protein disulfide isomerase. Interacts with apolipoprotein B.

It localises to the endoplasmic reticulum. Its function is as follows. Catalyzes the transport of triglyceride, cholesteryl ester, and phospholipid between phospholipid surfaces. Required for the secretion of plasma lipoproteins that contain apolipoprotein B. This Megalobrama amblycephala (Chinese blunt snout bream) protein is Microsomal triglyceride transfer protein.